The following is a 395-amino-acid chain: Argininosuccinate synthase (395 aa).

8-16 provides a ligand contact to ATP; the sequence is AYSGGLDTS. Tyrosine 86 and serine 91 together coordinate L-citrulline. Glycine 116 contributes to the ATP binding site. Positions 118, 122, and 123 each coordinate L-aspartate. An L-citrulline-binding site is contributed by asparagine 122. L-citrulline contacts are provided by arginine 126, serine 172, serine 181, glutamate 257, and tyrosine 269.

Belongs to the argininosuccinate synthase family. Type 1 subfamily. Homotetramer.

Its subcellular location is the cytoplasm. It catalyses the reaction L-citrulline + L-aspartate + ATP = 2-(N(omega)-L-arginino)succinate + AMP + diphosphate + H(+). Its pathway is amino-acid biosynthesis; L-arginine biosynthesis; L-arginine from L-ornithine and carbamoyl phosphate: step 2/3. This chain is Argininosuccinate synthase, found in Methanosarcina barkeri (strain Fusaro / DSM 804).